Here is a 554-residue protein sequence, read N- to C-terminus: Glutamine--tRNA ligase (554 aa).

Residues 34 to 44 carry the 'HIGH' region motif; it reads PEPNGYLHIGH. Residues 35–37 and 41–47 each bind ATP; these read EPN and HIGHAKS. The L-glutamine site is built by aspartate 67 and tyrosine 212. ATP contacts are provided by residues threonine 231, 261 to 262, and 269 to 271; these read RL and MSK. A 'KMSKS' region motif is present at residues 268–272; sequence VMSKR. Residues 317–324 are interaction with tRNA; the sequence is TKQDNTIE.

Belongs to the class-I aminoacyl-tRNA synthetase family. In terms of assembly, monomer.

The protein localises to the cytoplasm. It carries out the reaction tRNA(Gln) + L-glutamine + ATP = L-glutaminyl-tRNA(Gln) + AMP + diphosphate. This is Glutamine--tRNA ligase from Shigella boydii serotype 18 (strain CDC 3083-94 / BS512).